Consider the following 168-residue polypeptide: Heat shock protein beta-9 (168 aa).

The span at 1–12 (MQRVGSSFSTGQ) shows a compositional bias: polar residues. Disordered stretches follow at residues 1–25 (MQRVGSSFSTGQREPGENRVASRCP), 83–104 (TGQRQHESNDPSRGRYRMEQSV), and 129–168 (LWLRGQNKCLPPPEAQTGQSQKPRRGGPKSSLQNESVKNP). The sHSP domain occupies 38 to 151 (LPVRLLRDEV…EAQTGQSQKP (114 aa)). Basic and acidic residues predominate over residues 86–104 (RQHESNDPSRGRYRMEQSV). The span at 158–168 (SSLQNESVKNP) shows a compositional bias: polar residues.

The protein belongs to the small heat shock protein (HSP20) family. As to expression, testis specific.

It is found in the cytoplasm. The protein localises to the nucleus. The sequence is that of Heat shock protein beta-9 (Hspb9) from Mus musculus (Mouse).